Reading from the N-terminus, the 384-residue chain is G protein-coupled receptor 88 (384 aa).

Topologically, residues 1-35 (MTNSSSTSTSSTTGGSLLLLCEEEESWAGRRIPVS) are extracellular. A glycan (N-linked (GlcNAc...) asparagine) is linked at Asn-3. The chain crosses the membrane as a helical span at residues 36–56 (LLYSGLAIGGTLANGMVIYLV). The Cytoplasmic portion of the chain corresponds to 57 to 73 (SSFRKLQTTSNAFIVNG). A helical membrane pass occupies residues 74 to 94 (CAADLSVCALWMPQEAVLGLL). Over 95–116 (PTGSAEPPADWDGAGGSYRLLR) the chain is Extracellular. The helical transmembrane segment at 117–136 (GGLLGLGLTVSLLSHCLVAL) threads the bilayer. Residues 137–158 (NRYLLITRAPATYQALYQRRHT) lie on the Cytoplasmic side of the membrane. Residues 159-179 (AGMLALSWALALGLVLLLPPW) form a helical membrane-spanning segment. At 180–195 (APRPGAAPPRVHYPAL) the chain is on the extracellular side. The helical transmembrane segment at 196–216 (LAAAALLAQTALLLHCYLGIV) threads the bilayer. The Cytoplasmic portion of the chain corresponds to 217-285 (RRVRVSVKRV…RAQRRLSGLS (69 aa)). A helical membrane pass occupies residues 286–306 (VLLLCCVFLLATQPLVWVSLA). The Extracellular portion of the chain corresponds to 307-310 (SGFS). Residues 311 to 331 (LPVPWGVQAASWLLCCALSAL) traverse the membrane as a helical segment. The Cytoplasmic segment spans residues 332–384 (NPLLYTWRNEEFRRSVRSVLPGVGDAAAAAVAATAVPAVSQAQLGTRAAGQHW).

Belongs to the G-protein coupled receptor 1 family. Expressed predominantly in the striatum.

It is found in the cell membrane. The protein resides in the cell projection. The protein localises to the cilium membrane. It localises to the cytoplasm. Its subcellular location is the nucleus. Orphan G protein-coupled receptor implicated in a large repertoire of behavioral responses that engage motor activities, spatial learning, and emotional processing. May play a role in the regulation of cognitive and motor function. Couples with the heterotrimeric G protein complex of the G(i) subfamily, consisting of GNAI1, GNB1 and GNG2, thereby acting through a G(i)-mediated pathway. Plays a role in the attenuation of D1 dopamine receptor (D1R)-mediated cAMP response in ciliated cells. In non-ciliated cells, involved in the inhibition of the beta-2 adrenergic receptor (B2AR) response. The protein is G protein-coupled receptor 88 (GPR88) of Homo sapiens (Human).